A 240-amino-acid polypeptide reads, in one-letter code: Thiamine-phosphate synthase (240 aa).

4-amino-2-methyl-5-(diphosphooxymethyl)pyrimidine is bound by residues 63–67 and Asn-94; that span reads QYREK. 2 residues coordinate Mg(2+): Asp-95 and Asp-114. Thr-133 lines the 4-amino-2-methyl-5-(diphosphooxymethyl)pyrimidine pocket. 2-[(2R,5Z)-2-carboxy-4-methylthiazol-5(2H)-ylidene]ethyl phosphate is bound at residue 159–161; the sequence is TFT. Residue Lys-162 participates in 4-amino-2-methyl-5-(diphosphooxymethyl)pyrimidine binding. 2-[(2R,5Z)-2-carboxy-4-methylthiazol-5(2H)-ylidene]ethyl phosphate is bound by residues Gly-190 and 210 to 211; that span reads IS.

Belongs to the thiamine-phosphate synthase family. Requires Mg(2+) as cofactor.

The catalysed reaction is 2-[(2R,5Z)-2-carboxy-4-methylthiazol-5(2H)-ylidene]ethyl phosphate + 4-amino-2-methyl-5-(diphosphooxymethyl)pyrimidine + 2 H(+) = thiamine phosphate + CO2 + diphosphate. It carries out the reaction 2-(2-carboxy-4-methylthiazol-5-yl)ethyl phosphate + 4-amino-2-methyl-5-(diphosphooxymethyl)pyrimidine + 2 H(+) = thiamine phosphate + CO2 + diphosphate. The enzyme catalyses 4-methyl-5-(2-phosphooxyethyl)-thiazole + 4-amino-2-methyl-5-(diphosphooxymethyl)pyrimidine + H(+) = thiamine phosphate + diphosphate. It participates in cofactor biosynthesis; thiamine diphosphate biosynthesis; thiamine phosphate from 4-amino-2-methyl-5-diphosphomethylpyrimidine and 4-methyl-5-(2-phosphoethyl)-thiazole: step 1/1. In terms of biological role, condenses 4-methyl-5-(beta-hydroxyethyl)thiazole monophosphate (THZ-P) and 2-methyl-4-amino-5-hydroxymethyl pyrimidine pyrophosphate (HMP-PP) to form thiamine monophosphate (TMP). This is Thiamine-phosphate synthase from Methanosarcina mazei (strain ATCC BAA-159 / DSM 3647 / Goe1 / Go1 / JCM 11833 / OCM 88) (Methanosarcina frisia).